The primary structure comprises 147 residues: Thyrotropin subunit beta (147 aa).

The N-terminal stretch at 1–20 (MRVVLLASAVLCLLAGQVLS) is a signal peptide. 6 cysteine pairs are disulfide-bonded: Cys-22–Cys-72, Cys-36–Cys-87, Cys-39–Cys-126, Cys-47–Cys-103, Cys-51–Cys-105, and Cys-108–Cys-115. A glycan (N-linked (GlcNAc...) asparagine) is linked at Asn-43.

Belongs to the glycoprotein hormones subunit beta family. Heterodimer of a common alpha chain and a unique beta chain which confers biological specificity to thyrotropin, lutropin, follitropin and gonadotropin.

It localises to the secreted. In terms of biological role, indispensable for the control of thyroid structure and metabolism. May play some role in the biological processes of the immature fishes. In Anguilla anguilla (European freshwater eel), this protein is Thyrotropin subunit beta (tshb).